We begin with the raw amino-acid sequence, 184 residues long: Large ribosomal subunit protein uL5c (184 aa).

The protein belongs to the universal ribosomal protein uL5 family. In terms of assembly, part of the 50S ribosomal subunit; contacts the 5S rRNA.

Its subcellular location is the plastid. It is found in the chloroplast. In terms of biological role, binds 5S rRNA, forms part of the central protuberance of the 50S subunit. The chain is Large ribosomal subunit protein uL5c (rpl5) from Ostreococcus tauri.